Here is a 233-residue protein sequence, read N- to C-terminus: Probable GTP-binding protein EngB (233 aa).

The EngB-type G domain occupies 31-205; it reads TGVEIAFAGR…RRKLDTWFGP (175 aa). GTP-binding positions include 39–46, 66–70, 84–87, 151–154, and 184–186; these read GRSNAGKS, GRTQL, DLPG, TKAD, and FSS. Positions 46 and 68 each coordinate Mg(2+).

This sequence belongs to the TRAFAC class TrmE-Era-EngA-EngB-Septin-like GTPase superfamily. EngB GTPase family. Mg(2+) is required as a cofactor.

Necessary for normal cell division and for the maintenance of normal septation. The protein is Probable GTP-binding protein EngB of Photobacterium profundum (strain SS9).